The primary structure comprises 490 residues: MVPVVALVGRPNVGKSTLFNRLTRTRDALVADFPGLTRDRKYGRAEIEGREFICIDTGGIDGTEDGVETRMAEQSLLAIEEADVVLFMVDARAGLMPADEAIAKHLRSREKPTFLVANKTDGLDPDQAVVDFYALGLGEIYPIAASHGRGVLSLLEHVLLPWMEDLAPQEEVDEDAEYWAQFEAEENGEEEEEDDFDPQSLPIKLAIVGRPNVGKSTLTNRILGEERVVVYDMPGTTRDSIYIPMERDGREYVLIDTAGVRKRGKITDAVEKFSVIKTLQAIEDANVVMLVIDAREGISDQDLSLLGFILNSGRSLVIVVNKWDGLSQEVKEQVKETLDFRLGFIDFARVHFISALHGSGVGNLFESVREAYDSSTRRVGTSMLTRIMTMAVEDHQPPLVRGRRVKLKYAHAGGYNPPIVVIHGNQVKDLPDSYKRYLMNYFRKSLDVMGSPIRIQFKEGENPYANKRNTLTPTQMRKRKRLMKHIKKSK.

EngA-type G domains lie at 3-166 and 203-376; these read PVVA…MEDL and IKLA…DSST. GTP-binding positions include 9 to 16, 56 to 60, 118 to 121, 209 to 216, 256 to 260, and 321 to 324; these read GRPNVGKS, DTGGI, NKTD, DTAGV, and NKWD. The 85-residue stretch at 377–461 folds into the KH-like domain; it reads RRVGTSMLTR…PIRIQFKEGE (85 aa).

The protein belongs to the TRAFAC class TrmE-Era-EngA-EngB-Septin-like GTPase superfamily. EngA (Der) GTPase family. Associates with the 50S ribosomal subunit.

Its function is as follows. GTPase that plays an essential role in the late steps of ribosome biogenesis. In Escherichia coli O7:K1 (strain IAI39 / ExPEC), this protein is GTPase Der.